The sequence spans 388 residues: Succinate--CoA ligase [ADP-forming] subunit beta (388 aa).

The ATP-grasp domain occupies 9–244; that stretch reads KQLFADYGLP…PSQEDPREAH (236 aa). Residues Lys-46, 53–55, Glu-99, Thr-102, and Glu-107 each bind ATP; that span reads GRG. 2 residues coordinate Mg(2+): Asn-199 and Asp-213. Substrate is bound by residues Asn-264 and 321–323; that span reads GIV.

It belongs to the succinate/malate CoA ligase beta subunit family. In terms of assembly, heterotetramer of two alpha and two beta subunits. Mg(2+) serves as cofactor.

It carries out the reaction succinate + ATP + CoA = succinyl-CoA + ADP + phosphate. It catalyses the reaction GTP + succinate + CoA = succinyl-CoA + GDP + phosphate. It participates in carbohydrate metabolism; tricarboxylic acid cycle; succinate from succinyl-CoA (ligase route): step 1/1. Succinyl-CoA synthetase functions in the citric acid cycle (TCA), coupling the hydrolysis of succinyl-CoA to the synthesis of either ATP or GTP and thus represents the only step of substrate-level phosphorylation in the TCA. The beta subunit provides nucleotide specificity of the enzyme and binds the substrate succinate, while the binding sites for coenzyme A and phosphate are found in the alpha subunit. The chain is Succinate--CoA ligase [ADP-forming] subunit beta from Hahella chejuensis (strain KCTC 2396).